Here is a 245-residue protein sequence, read N- to C-terminus: MTTLFIADLHLSAERTDITDCFLHFMQQEARNIDALYVLGDLFEMWIGDDDDSPFLQQIKHAFKQLTDSGVPCYFIYGNRDFLIGSRFCQETGMTLLPEHTVIDLYGTPTLILHGDTLCIEDEDYLRYRKRVHNRFIQWLFFCLPLTYRQKVGDKIRSGSSKNNKEKTTSIMDVTPNEVVRLMAEQNVIDMIHGHTHRPDVHHIEVNGKAAIRTVLGDWYHHGSVLVCTPDGCKLETRDFSEKNQ.

D8, H10, D41, N79, and H114 together coordinate Mn(2+). 79–80 (NR) serves as a coordination point for substrate. The substrate site is built by D122, S160, N164, K167, and H195. Residues H195 and H197 each contribute to the Mn(2+) site.

Belongs to the LpxH family. Requires Mn(2+) as cofactor.

The protein resides in the cell inner membrane. The enzyme catalyses UDP-2-N,3-O-bis[(3R)-3-hydroxytetradecanoyl]-alpha-D-glucosamine + H2O = 2-N,3-O-bis[(3R)-3-hydroxytetradecanoyl]-alpha-D-glucosaminyl 1-phosphate + UMP + 2 H(+). It participates in glycolipid biosynthesis; lipid IV(A) biosynthesis; lipid IV(A) from (3R)-3-hydroxytetradecanoyl-[acyl-carrier-protein] and UDP-N-acetyl-alpha-D-glucosamine: step 4/6. In terms of biological role, hydrolyzes the pyrophosphate bond of UDP-2,3-diacylglucosamine to yield 2,3-diacylglucosamine 1-phosphate (lipid X) and UMP by catalyzing the attack of water at the alpha-P atom. Involved in the biosynthesis of lipid A, a phosphorylated glycolipid that anchors the lipopolysaccharide to the outer membrane of the cell. The chain is UDP-2,3-diacylglucosamine hydrolase from Photobacterium profundum (strain SS9).